We begin with the raw amino-acid sequence, 582 residues long: Semenogelin-2 (582 aa).

Positions 1-23 (MKSIILFVLSLLLILEKQAAVMG) are cleaved as a signal peptide. 3 disordered regions span residues 25–62 (KGGS…SKGS), 91–190 (HKTT…QGGS), and 272–553 (NLNQ…FSGA). A compositionally biased stretch (basic and acidic residues) spans 50–59 (GQKDKQHTES). Residues 92-134 (KTTKSKQHLRRHQRLLNYKQKGRGRVKPKRHFHLIVIHRKGGQ) show a composition bias toward basic residues. Composition is skewed to polar residues over residues 137–161 (HGTQ…QYSN) and 174–190 (EQAS…QGGS). The span at 293 to 305 (TEERQPNHEEKSV) shows a compositional bias: basic and acidic residues. A compositionally biased stretch (polar residues) spans 325–335 (KSQNQVTIPSQ). Over residues 336–345 (DQEHGHKENK) the composition is skewed to basic and acidic residues. Over residues 385–395 (KSQNQVAIPSQ) the composition is skewed to polar residues. Residues 396–405 (DQEHGHKENK) are compositionally biased toward basic and acidic residues. The span at 445–455 (KSQNQVTIPSQ) shows a compositional bias: polar residues. Positions 456 to 465 (DQEHGHKENK) are enriched in basic and acidic residues. 2 stretches are compositionally biased toward polar residues: residues 487–498 (KDVSQSSLSFQT) and 506–529 (SQIQ…NSGK). Residues 530 to 546 (SADRKQDLLSHEQEGRY) are compositionally biased toward basic and acidic residues.

The protein belongs to the semenogelin family. In terms of assembly, interacts with SERPINA5.

The protein resides in the secreted. Functionally, participates in the formation of a gel matrix (sperm coagulum) entrapping the accessory gland secretions and ejaculated spermatozoa. The polypeptide is Semenogelin-2 (SEMG2) (Macaca fascicularis (Crab-eating macaque)).